The following is a 267-amino-acid chain: Translation initiation factor 2 subunit alpha (267 aa).

An S1 motif domain is found at 10 to 81; sequence GELVVGKVDD…SAQQIDLSLK (72 aa).

The protein belongs to the eIF-2-alpha family. In terms of assembly, heterotrimer composed of an alpha, a beta and a gamma chain.

Functionally, eIF-2 functions in the early steps of protein synthesis by forming a ternary complex with GTP and initiator tRNA. This chain is Translation initiation factor 2 subunit alpha, found in Halobacterium salinarum (strain ATCC 29341 / DSM 671 / R1).